The primary structure comprises 345 residues: 3-isopropylmalate dehydrogenase (345 aa).

74–87 (GPKWDGLPRKIRPE) is a binding site for NAD(+). Substrate contacts are provided by arginine 94, arginine 104, arginine 132, and aspartate 217. Residues aspartate 217, aspartate 241, and aspartate 245 each coordinate Mg(2+). 274–286 (GSAPDIAGKGIAN) lines the NAD(+) pocket.

The protein belongs to the isocitrate and isopropylmalate dehydrogenases family. LeuB type 1 subfamily. As to quaternary structure, homodimer. It depends on Mg(2+) as a cofactor. Requires Mn(2+) as cofactor.

The protein localises to the cytoplasm. It catalyses the reaction (2R,3S)-3-isopropylmalate + NAD(+) = 4-methyl-2-oxopentanoate + CO2 + NADH. The protein operates within amino-acid biosynthesis; L-leucine biosynthesis; L-leucine from 3-methyl-2-oxobutanoate: step 3/4. Functionally, catalyzes the oxidation of 3-carboxy-2-hydroxy-4-methylpentanoate (3-isopropylmalate) to 3-carboxy-4-methyl-2-oxopentanoate. The product decarboxylates to 4-methyl-2 oxopentanoate. The chain is 3-isopropylmalate dehydrogenase (leuB) from Thermus thermophilus (strain ATCC 27634 / DSM 579 / HB8).